Consider the following 332-residue polypeptide: Arabinogalactan endo-beta-1,4-galactanase (332 aa).

N-linked (GlcNAc...) asparagine glycosylation is present at asparagine 111. Residue glutamate 135 is the Proton donor of the active site. The active-site Nucleophile is the glutamate 245.

This sequence belongs to the glycosyl hydrolase 53 family.

It catalyses the reaction The enzyme specifically hydrolyzes (1-&gt;4)-beta-D-galactosidic linkages in type I arabinogalactans.. The polypeptide is Arabinogalactan endo-beta-1,4-galactanase (Thermothelomyces thermophilus (Myceliophthora thermophila)).